The sequence spans 301 residues: GTPase Era (301 aa).

Residues 4 to 173 form the Era-type G domain; it reads KAGFVALIGK…LECISKHLSP (170 aa). The G1 stretch occupies residues 12 to 19; it reads GKPNAGKS. 12–19 contributes to the GTP binding site; that stretch reads GKPNAGKS. Residues 38–42 are G2; that stretch reads NATRK. The tract at residues 64-67 is G3; it reads DTPG. GTP contacts are provided by residues 64 to 68 and 122 to 125; these read DTPGL and SKID. The tract at residues 122–125 is G4; the sequence is SKID. Residues 152 to 154 are G5; the sequence is LSA. Positions 204 to 280 constitute a KH type-2 domain; that stretch reads LSDEIPYESD…FLNLQVIAQK (77 aa).

This sequence belongs to the TRAFAC class TrmE-Era-EngA-EngB-Septin-like GTPase superfamily. Era GTPase family. In terms of assembly, monomer.

The protein localises to the cytoplasm. It localises to the cell inner membrane. In terms of biological role, an essential GTPase that binds both GDP and GTP, with rapid nucleotide exchange. Plays a role in 16S rRNA processing and 30S ribosomal subunit biogenesis and possibly also in cell cycle regulation and energy metabolism. The chain is GTPase Era from Helicobacter pylori (strain Shi470).